The chain runs to 233 residues: MADS-box protein CMB1 (233 aa).

The MADS-box domain maps to 3–58 (RGRVELKRIENKINRQVTFAKRRNGLLKKAYELSVLCDAEVALIVFSNRGKLYEFC). Residues 87 to 177 (TESSYQEYLK…KTKLEESCAS (91 aa)) form the K-box domain.

The protein localises to the nucleus. This chain is MADS-box protein CMB1 (CMB1), found in Dianthus caryophyllus (Carnation).